The following is a 149-amino-acid chain: UPF0179 protein Mbar_A0292 (149 aa).

The protein belongs to the UPF0179 family.

The polypeptide is UPF0179 protein Mbar_A0292 (Methanosarcina barkeri (strain Fusaro / DSM 804)).